Here is a 54-residue protein sequence, read N- to C-terminus: Large ribosomal subunit protein bL33 (54 aa).

This sequence belongs to the bacterial ribosomal protein bL33 family.

In Roseiflexus castenholzii (strain DSM 13941 / HLO8), this protein is Large ribosomal subunit protein bL33.